Here is an 875-residue protein sequence, read N- to C-terminus: Probable ATP-dependent RNA helicase DDX10 (875 aa).

The disordered stretch occupies residues 1 to 44 (MGKTVASLGQGTRPDPVRSFNRWKKKHSHRQHQKKERRKQLKKP). T4 carries the phosphothreonine modification. Residue S7 is modified to Phosphoserine. A compositionally biased stretch (basic residues) spans 21-41 (NRWKKKHSHRQHQKKERRKQL). The Q motif motif lies at 69–97 (TRFSDFPLSKKTLKGLQEAQYRLVTEIQK). ATP is bound by residues 89-91 (YRL), Q96, and 113-120 (AKTGSGKT). Positions 100–274 (IGLALQGKDV…RLSLKDPEYV (175 aa)) constitute a Helicase ATP-binding domain. Positions 222–225 (DEAD) match the DEAD box motif. Residues 300–449 (KISVLFSFLR…EIKINPEKLI (150 aa)) form the Helicase C-terminal domain. Residues 525 to 612 (LVKNPVTEAV…HTESVVSIEE (88 aa)) are disordered. Residue S540 is modified to Phosphoserine. Residue K556 is modified to N6-acetyllysine. Residues 562 to 575 (KSGERLEETEHRLA) are compositionally biased toward basic and acidic residues. The span at 578 to 593 (DGDEEQDEETEDEETE) shows a compositional bias: acidic residues. T587 is subject to Phosphothreonine. The span at 594-604 (DHLGKAREPHT) shows a compositional bias: basic and acidic residues. K652 is covalently cross-linked (Glycyl lysine isopeptide (Lys-Gly) (interchain with G-Cter in SUMO2)). Positions 734 to 744 (EEDKFDKEEYR) are enriched in basic and acidic residues. The segment at 734–860 (EEDKFDKEEY…VEPLDTGLSL (127 aa)) is disordered. Residues 745–754 (KKIKAKHRER) are compositionally biased toward basic residues. Residues 755 to 774 (RLKEREARREANKRQAKARD) are compositionally biased toward basic and acidic residues. A compositionally biased stretch (acidic residues) spans 775 to 789 (EEEAFLDWSDEDDGG). S783 is subject to Phosphoserine. Residues 797-831 (DPDKHRSSEESESEDTNHKMSDTKKKQETRKRNNT) are compositionally biased toward basic and acidic residues.

Belongs to the DEAD box helicase family. DDX10/DBP4 subfamily. Interacts with AIM2; this interaction promotes AIM2 stability. Interacts with SCNA; this interaction causes DDX10 mislocalization to the nucleoplasm and cytoplasmic inclusions.

It localises to the cytoplasm. The protein localises to the nucleus. It is found in the nucleolus. It carries out the reaction ATP + H2O = ADP + phosphate + H(+). In terms of biological role, putative ATP-dependent RNA helicase that plays various role in innate immunity or inflammation. Plays a role in the enhancement of AIM2-induced inflammasome activation by interacting with AIM2 and stabilizing its protein level. Negatively regulates viral infection by promoting interferon beta production and interferon stimulated genes/ISGs expression. The sequence is that of Probable ATP-dependent RNA helicase DDX10 (Ddx10) from Mus musculus (Mouse).